Reading from the N-terminus, the 238-residue chain is Octanoyltransferase (238 aa).

Residues 40–220 (AGGSDALLLL…RVCDALDGRL (181 aa)) enclose the BPL/LPL catalytic domain. Residues 78 to 85 (RGGKITWH), 150 to 152 (AIG), and 163 to 165 (GFA) contribute to the substrate site. The active-site Acyl-thioester intermediate is the C181.

Belongs to the LipB family.

The protein localises to the cytoplasm. The catalysed reaction is octanoyl-[ACP] + L-lysyl-[protein] = N(6)-octanoyl-L-lysyl-[protein] + holo-[ACP] + H(+). It participates in protein modification; protein lipoylation via endogenous pathway; protein N(6)-(lipoyl)lysine from octanoyl-[acyl-carrier-protein]: step 1/2. Catalyzes the transfer of endogenously produced octanoic acid from octanoyl-acyl-carrier-protein onto the lipoyl domains of lipoate-dependent enzymes. Lipoyl-ACP can also act as a substrate although octanoyl-ACP is likely to be the physiological substrate. The chain is Octanoyltransferase from Mycobacterium sp. (strain JLS).